A 155-amino-acid polypeptide reads, in one-letter code: Endoribonuclease YbeY (155 aa).

3 residues coordinate Zn(2+): His114, His118, and His124.

The protein belongs to the endoribonuclease YbeY family. Zn(2+) is required as a cofactor.

It is found in the cytoplasm. In terms of biological role, single strand-specific metallo-endoribonuclease involved in late-stage 70S ribosome quality control and in maturation of the 3' terminus of the 16S rRNA. The polypeptide is Endoribonuclease YbeY (Shigella flexneri serotype 5b (strain 8401)).